A 360-amino-acid polypeptide reads, in one-letter code: 8-hydroxygeraniol dehydrogenase (360 aa).

The Zn(2+) site is built by cysteine 50, histidine 72, cysteine 103, cysteine 106, cysteine 109, cysteine 117, and cysteine 166.

Belongs to the zinc-containing alcohol dehydrogenase family. Requires Zn(2+) as cofactor. As to expression, present in seedlings and vascular tissues (at protein level). Restricted to the epidermis.

The enzyme catalyses (6E)-8-hydroxygeraniol + 2 NADP(+) = (6E)-8-oxogeranial + 2 NADPH + 2 H(+). Its function is as follows. Dehydrogenase involved in the biosynthesis of oxogeranial from hydroxygeraniol, a precursor of the terpenoid indole alkaloids such as vinblastine and vincristine. The sequence is that of 8-hydroxygeraniol dehydrogenase (10HGO) from Catharanthus roseus (Madagascar periwinkle).